Here is a 919-residue protein sequence, read N- to C-terminus: Kinesin-like protein KIN-6 (919 aa).

The interval 1–59 is disordered; the sequence is MVRLSTKPPNPKVEMNLKEPPITGAGAGAAASPPAPSTLRRNPPRSARPPPTPLPNSKP. The span at 28–45 shows a compositional bias: low complexity; that stretch reads GAAASPPAPSTLRRNPPR. A compositionally biased stretch (pro residues) spans 46-56; the sequence is SARPPPTPLPN. Residues 72–415 enclose the Kinesin motor domain; it reads RLKVFLRIRP…LRQASPYMKI (344 aa). 171-178 serves as a coordination point for ATP; sequence GPTGSGKT. Disordered regions lie at residues 591–615, 674–700, 711–730, 737–764, and 886–919; these read EEVS…TGTG, SESC…SFTD, SPQF…EEER, TTEG…EVNS, and KEEK…GRAQ. A compositionally biased stretch (basic and acidic residues) spans 597-612; that stretch reads STGHGPERSSDYDDKT. Positions 685-697 are enriched in low complexity; that stretch reads HSSSSLDHPSDQS. Residues 755 to 764 are compositionally biased toward polar residues; sequence TPSCSQEVNS. Residues 886–912 show a composition bias toward basic and acidic residues; it reads KEEKVKSSRDAMGRSDKLIRLLTDHPP.

This sequence belongs to the TRAFAC class myosin-kinesin ATPase superfamily. Kinesin family. KIN-6 subfamily.

This Oryza sativa subsp. japonica (Rice) protein is Kinesin-like protein KIN-6.